The chain runs to 468 residues: Aldehyde dehydrogenase family 3 member B1 (468 aa).

M1 carries the post-translational modification N-acetylmethionine. 188–193 (GSPRVG) provides a ligand contact to NAD(+). Active-site residues include E210 and C244. Residue C463 is the site of S-palmitoyl cysteine attachment. C465 is subject to Cysteine methyl ester. C465 carries the S-geranylgeranyl cysteine lipid modification. Positions 466–468 (TLL) are cleaved as a propeptide — removed in mature form.

This sequence belongs to the aldehyde dehydrogenase family. Dually lipidated in the C-terminus; prenylation occurs prior to, and is a prerequisite for palmitoylation. It is also required for activity towards long-chain substrates. As to expression, highest expression in kidney and lung.

Its subcellular location is the cell membrane. It carries out the reaction an aldehyde + NADP(+) + H2O = a carboxylate + NADPH + 2 H(+). It catalyses the reaction an aldehyde + NAD(+) + H2O = a carboxylate + NADH + 2 H(+). The enzyme catalyses a long-chain fatty aldehyde + NAD(+) + H2O = a long-chain fatty acid + NADH + 2 H(+). The catalysed reaction is a medium-chain fatty aldehyde + NAD(+) + H2O = a medium-chain fatty acid + NADH + 2 H(+). It carries out the reaction octanal + NAD(+) + H2O = octanoate + NADH + 2 H(+). It catalyses the reaction nonanal + NAD(+) + H2O = nonanoate + NADH + 2 H(+). The enzyme catalyses hexadecanoate + NADH + 2 H(+) = hexadecanal + NAD(+) + H2O. The catalysed reaction is (2E)-octenal + NAD(+) + H2O = (2E)-octenoate + NADH + 2 H(+). It carries out the reaction (E)-non-2-enal + NAD(+) + H2O = (E)-non-2-enoate + NADH + 2 H(+). It catalyses the reaction (E)-4-hydroxynon-2-enal + NAD(+) + H2O = (E)-4-hydroxynon-2-enoate + NADH + 2 H(+). The enzyme catalyses (2E)-hexadecenal + NAD(+) + H2O = (E)-hexadec-2-enoate + NADH + 2 H(+). The catalysed reaction is benzaldehyde + NAD(+) + H2O = benzoate + NADH + 2 H(+). It carries out the reaction a medium-chain fatty aldehyde + NADP(+) + H2O = a medium-chain fatty acid + NADPH + 2 H(+). It catalyses the reaction hexanal + NADP(+) + H2O = hexanoate + NADPH + 2 H(+). The enzyme catalyses octanal + NADP(+) + H2O = octanoate + NADPH + 2 H(+). The catalysed reaction is nonanal + NADP(+) + H2O = nonanoate + NADPH + 2 H(+). It carries out the reaction (2E)-octenal + NADP(+) + H2O = (2E)-octenoate + NADPH + 2 H(+). It catalyses the reaction (E)-non-2-enal + NADP(+) + H2O = (E)-non-2-enoate + NADPH + 2 H(+). The enzyme catalyses (E)-4-hydroxynon-2-enal + NADP(+) + H2O = (E)-4-hydroxynon-2-enoate + NADPH + 2 H(+). The catalysed reaction is benzaldehyde + NADP(+) + H2O = benzoate + NADPH + 2 H(+). It participates in alcohol metabolism; ethanol degradation; acetate from ethanol: step 2/2. Its function is as follows. Oxidizes medium and long chain saturated and unsaturated fatty aldehydes generated in the plasma membrane into non-toxic fatty acids. May have a protective role against the cytotoxicity induced by lipid peroxidation. Short-chain fatty aldehydes are not good substrates. Can use both NADP(+) and NAD(+) as electron acceptor in vitro, however in vivo preference will depend on their tissue levels. Low activity towards acetaldehyde and 3,4-dihydroxyphenylacetaldehyde. Able to metabolize aromatic aldehydes such as benzaldehyde to their acid form. This Homo sapiens (Human) protein is Aldehyde dehydrogenase family 3 member B1 (ALDH3B1).